Consider the following 404-residue polypeptide: Arginine biosynthesis bifunctional protein ArgJ (404 aa).

Substrate is bound by residues T166, K189, T200, E280, N399, and S404. The Nucleophile role is filled by T200.

This sequence belongs to the ArgJ family. As to quaternary structure, heterotetramer of two alpha and two beta chains.

The protein localises to the cytoplasm. It catalyses the reaction N(2)-acetyl-L-ornithine + L-glutamate = N-acetyl-L-glutamate + L-ornithine. It carries out the reaction L-glutamate + acetyl-CoA = N-acetyl-L-glutamate + CoA + H(+). Its pathway is amino-acid biosynthesis; L-arginine biosynthesis; L-ornithine and N-acetyl-L-glutamate from L-glutamate and N(2)-acetyl-L-ornithine (cyclic): step 1/1. The protein operates within amino-acid biosynthesis; L-arginine biosynthesis; N(2)-acetyl-L-ornithine from L-glutamate: step 1/4. Catalyzes two activities which are involved in the cyclic version of arginine biosynthesis: the synthesis of N-acetylglutamate from glutamate and acetyl-CoA as the acetyl donor, and of ornithine by transacetylation between N(2)-acetylornithine and glutamate. The polypeptide is Arginine biosynthesis bifunctional protein ArgJ (Mycobacterium bovis (strain ATCC BAA-935 / AF2122/97)).